Consider the following 207-residue polypeptide: Intraflagellar transport protein 43 homolog A (207 aa).

Residues 1–104 (MDDNLQLGDS…GSDDEGDIPV (104 aa)) form a disordered region.

Belongs to the IFT43 family. As to quaternary structure, component of IFT complex A.

In terms of biological role, component of IFT complex A (IFT-A) involved in retrograde ciliary transport along microtubules from the ciliary tip to the base. This is Intraflagellar transport protein 43 homolog A (ift43a) from Salmo salar (Atlantic salmon).